Reading from the N-terminus, the 335-residue chain is Biotin synthase (335 aa).

A Radical SAM core domain is found at 43 to 269; the sequence is YFGKKVKLNM…INPTKEIRIA (227 aa). [4Fe-4S] cluster contacts are provided by Cys-61, Cys-65, and Cys-68. Residues Cys-104, Cys-137, Cys-197, and Arg-267 each coordinate [2Fe-2S] cluster.

This sequence belongs to the radical SAM superfamily. Biotin synthase family. Homodimer. [4Fe-4S] cluster is required as a cofactor. Requires [2Fe-2S] cluster as cofactor.

The catalysed reaction is (4R,5S)-dethiobiotin + (sulfur carrier)-SH + 2 reduced [2Fe-2S]-[ferredoxin] + 2 S-adenosyl-L-methionine = (sulfur carrier)-H + biotin + 2 5'-deoxyadenosine + 2 L-methionine + 2 oxidized [2Fe-2S]-[ferredoxin]. It participates in cofactor biosynthesis; biotin biosynthesis; biotin from 7,8-diaminononanoate: step 2/2. Its function is as follows. Catalyzes the conversion of dethiobiotin (DTB) to biotin by the insertion of a sulfur atom into dethiobiotin via a radical-based mechanism. The protein is Biotin synthase of Staphylococcus aureus (strain USA300).